The following is a 406-amino-acid chain: Putative cyclin-F3-2 (406 aa).

The interval 1–107 (MARPRTRSVA…PGAAGGPWQL (107 aa)) is disordered. 2 stretches are compositionally biased toward low complexity: residues 11-21 (RMEATAAAAAA) and 29-57 (NPDGAEGAAVVAVAPEAAAEGPNEPNAGE).

The protein belongs to the cyclin family. Cyclin F subfamily.

The chain is Putative cyclin-F3-2 (CYCF3-2) from Oryza sativa subsp. japonica (Rice).